A 498-amino-acid polypeptide reads, in one-letter code: Lysine--tRNA ligase (498 aa).

Mg(2+) is bound by residues Glu407 and Glu414.

Belongs to the class-II aminoacyl-tRNA synthetase family. Homodimer. Mg(2+) serves as cofactor.

Its subcellular location is the cytoplasm. The catalysed reaction is tRNA(Lys) + L-lysine + ATP = L-lysyl-tRNA(Lys) + AMP + diphosphate. The sequence is that of Lysine--tRNA ligase (lysS) from Rhizobium meliloti (strain 1021) (Ensifer meliloti).